Here is a 309-residue protein sequence, read N- to C-terminus: Pyrroline-5-carboxylate reductase 1, mitochondrial (309 aa).

At Ser2 the chain carries N-acetylserine. NADP(+)-binding positions include 6–11 (IGAGQL) and Ser34. Positions 8, 10, 11, 34, 36, 56, 70, 71, and 97 each coordinate NADPH. NADP(+) is bound by residues Asn56, 69–72 (AVKP), and 95–97 (CAA). Glu164 provides a ligand contact to L-proline. Asn230 is an NADPH binding site. Residues Ala237 and Thr238 each contribute to the L-proline site. Residues Ser278 and Ser301 each carry the phosphoserine modification.

This sequence belongs to the pyrroline-5-carboxylate reductase family. In terms of assembly, homodecamer; composed of 5 homodimers. Interacts with LTO1. In terms of tissue distribution, highly expressed in osteoblasts and skin.

It is found in the mitochondrion. It carries out the reaction L-proline + NADP(+) = (S)-1-pyrroline-5-carboxylate + NADPH + 2 H(+). The catalysed reaction is L-proline + NAD(+) = (S)-1-pyrroline-5-carboxylate + NADH + 2 H(+). It participates in amino-acid biosynthesis; L-proline biosynthesis; L-proline from L-glutamate 5-semialdehyde: step 1/1. Its function is as follows. Oxidoreductase that catalyzes the last step in proline biosynthesis, which corresponds to the reduction of pyrroline-5-carboxylate to L-proline using NAD(P)H. At physiologic concentrations, has higher specific activity in the presence of NADH. Involved in the cellular response to oxidative stress. The sequence is that of Pyrroline-5-carboxylate reductase 1, mitochondrial from Mus musculus (Mouse).